A 341-amino-acid chain; its full sequence is UDP-3-O-acylglucosamine N-acyltransferase (341 aa).

H255 functions as the Proton acceptor in the catalytic mechanism.

Belongs to the transferase hexapeptide repeat family. LpxD subfamily. As to quaternary structure, homotrimer.

It catalyses the reaction a UDP-3-O-[(3R)-3-hydroxyacyl]-alpha-D-glucosamine + a (3R)-hydroxyacyl-[ACP] = a UDP-2-N,3-O-bis[(3R)-3-hydroxyacyl]-alpha-D-glucosamine + holo-[ACP] + H(+). Its pathway is bacterial outer membrane biogenesis; LPS lipid A biosynthesis. In terms of biological role, catalyzes the N-acylation of UDP-3-O-acylglucosamine using 3-hydroxyacyl-ACP as the acyl donor. Is involved in the biosynthesis of lipid A, a phosphorylated glycolipid that anchors the lipopolysaccharide to the outer membrane of the cell. This is UDP-3-O-acylglucosamine N-acyltransferase from Granulibacter bethesdensis (strain ATCC BAA-1260 / CGDNIH1).